Consider the following 497-residue polypeptide: tRNA-2-methylthio-N(6)-dimethylallyladenosine synthase (497 aa).

The region spanning 4 to 120 is the MTTase N-terminal domain; the sequence is RSYEVRTFGC…LPVLLERARH (117 aa). [4Fe-4S] cluster is bound by residues Cys-13, Cys-49, Cys-83, Cys-157, Cys-161, and Cys-164. In terms of domain architecture, Radical SAM core spans 143 to 374; the sequence is RASHHSAWVS…ALQDEVSWAQ (232 aa). The TRAM domain occupies 376–445; sequence RELVGRRVEL…PHHLTADGPL (70 aa).

It belongs to the methylthiotransferase family. MiaB subfamily. As to quaternary structure, monomer. It depends on [4Fe-4S] cluster as a cofactor.

The protein localises to the cytoplasm. It catalyses the reaction N(6)-dimethylallyladenosine(37) in tRNA + (sulfur carrier)-SH + AH2 + 2 S-adenosyl-L-methionine = 2-methylsulfanyl-N(6)-dimethylallyladenosine(37) in tRNA + (sulfur carrier)-H + 5'-deoxyadenosine + L-methionine + A + S-adenosyl-L-homocysteine + 2 H(+). Functionally, catalyzes the methylthiolation of N6-(dimethylallyl)adenosine (i(6)A), leading to the formation of 2-methylthio-N6-(dimethylallyl)adenosine (ms(2)i(6)A) at position 37 in tRNAs that read codons beginning with uridine. In Frankia alni (strain DSM 45986 / CECT 9034 / ACN14a), this protein is tRNA-2-methylthio-N(6)-dimethylallyladenosine synthase.